The chain runs to 178 residues: Gamma-crystallin M1 (178 aa).

Beta/gamma crystallin 'Greek key' domains follow at residues 2-40 (GKIIFYDDRNFQGRSYDCMSDCSDISSYLSRVGSIRVES) and 41-86 (GCFM…RMIP). Residues 87-91 (PYRGS) are connecting peptide. Beta/gamma crystallin 'Greek key' domains are found at residues 92–132 (YRMR…HVMD) and 133–175 (GHWL…RRIT).

This sequence belongs to the beta/gamma-crystallin family. As to quaternary structure, monomer.

Its function is as follows. Crystallins are the dominant structural components of the vertebrate eye lens. The protein is Gamma-crystallin M1 of Cyprinus carpio (Common carp).